Here is a 463-residue protein sequence, read N- to C-terminus: Golgi-associated PDZ and coiled-coil motif-containing protein (463 aa).

Serine 2 carries the post-translational modification N-acetylserine. A coiled-coil region spans residues 85-201 (AQTVSQINHK…RHIAVLQAEV (117 aa)). The 84-residue stretch at 289–372 (KVLLLKEDHE…EIEFEVVYVA (84 aa)) folds into the PDZ domain. A phosphoserine mark is found at serine 402 and serine 405.

In terms of assembly, homooligomer. Interacts with FZD5. Interacts with FZD8. Interacts with GRID2 and BECN1. Interacts with CSPG5. Interacts with CLCN3. Interacts with STX6. Interacts with CFTR. Interacts with ASIC3. Interacts with GOLGA3. Interacts with NLGN1. Interacts with RHOQ. Interacts with MARCHF2; the interaction leads to CFTR ubiquitination and degradation. May interact with CACNG2. Interacts with CCDC62. As to expression, ubiquitously expressed (at protein level). Expressed in dorsal root glanglion (DRG), spinal cord and brain. Isoform 1 is preferentially expressed in whole brain (at protein level) and cerebellum. Expressed in spermatocytes and spermatides but not in Sertoli cells and spermatogonia.

The protein localises to the cytoplasm. It localises to the golgi apparatus membrane. Its subcellular location is the golgi apparatus. The protein resides in the trans-Golgi network membrane. It is found in the synapse. The protein localises to the postsynaptic density. It localises to the cell projection. Its subcellular location is the dendrite. Its function is as follows. Plays a role in intracellular protein trafficking and degradation. May regulate CFTR chloride currents and acid-induced ASIC3 currents by modulating cell surface expression of both channels. May also regulate the intracellular trafficking of the ADR1B receptor. May play a role in autophagy. Together with MARCHF2 mediates the ubiquitination and lysosomal degradation of CFTR. Overexpression results in CFTR intracellular retention and degradation in the lysosomes. In Mus musculus (Mouse), this protein is Golgi-associated PDZ and coiled-coil motif-containing protein.